A 688-amino-acid chain; its full sequence is Lipase (688 aa).

A signal peptide spans 1-35; it reads MKTRQNKYSIRKFSVGASSILIAALLFMGGGSAQA. The interval 31–309 is disordered; it reads GSAQAAEQQQ…KSAKQKQYKN (279 aa). Residues 36 to 302 constitute a propeptide, removed in mature form; the sequence is AEQQQDKGTV…KNEDQTNKSA (267 aa). Positions 45-54 are enriched in polar residues; that stretch reads VENSTTQSIG. Composition is skewed to basic and acidic residues over residues 84-95 and 103-143; these read ESLHNETPKNED and SQND…KHAS. 2 stretches are compositionally biased toward polar residues: residues 144–175 and 184–211; these read ENNQTLHSKAAQSNEDVKTKPSQLDNTTAQQE and KQDTQSSKTTDLLRATGQNQSKDSQSTE. The span at 227–268 shows a compositional bias: basic and acidic residues; it reads KNDDDKVETFNLNSKEEPLKVDKQANPTTDKDKSSKNDKGSH. The span at 274–289 shows a compositional bias: polar residues; sequence LESNAVATTNKQSKQQ. Ser-418 acts as the Nucleophile in catalysis. Asp-609 functions as the Charge relay system in the catalytic mechanism. A Ca(2+)-binding site is contributed by Asp-647. His-648 (charge relay system) is an active-site residue. Ca(2+)-binding residues include Asp-650, Asp-655, and Asp-658.

It belongs to the AB hydrolase superfamily. Lipase family.

Its subcellular location is the secreted. The enzyme catalyses a triacylglycerol + H2O = a diacylglycerol + a fatty acid + H(+). This chain is Lipase (lip), found in Staphylococcus epidermidis (strain ATCC 35984 / DSM 28319 / BCRC 17069 / CCUG 31568 / BM 3577 / RP62A).